Here is a 58-residue protein sequence, read N- to C-terminus: Keratin-associated protein 19-9b (58 aa).

The segment at 6-52 (GNYYGGLGYGLGGFGGFGGLGYGYGSSYGLGGYGGYGYFSPSFYGGY) is 12 X 2 AA repeats of G-[YCGS].

The protein belongs to the KRTAP type 19 family. In terms of assembly, interacts with hair keratins.

In the hair cortex, hair keratin intermediate filaments are embedded in an interfilamentous matrix, consisting of hair keratin-associated proteins (KRTAP), which are essential for the formation of a rigid and resistant hair shaft through their extensive disulfide bond cross-linking with abundant cysteine residues of hair keratins. The matrix proteins include the high-sulfur and high-glycine-tyrosine keratins. In Mus musculus (Mouse), this protein is Keratin-associated protein 19-9b (Krtap19-9b).